The sequence spans 549 residues: Lipase 4 (549 aa).

The first 15 residues, 1–15, serve as a signal peptide directing secretion; the sequence is MKLALVLSLIVSVAA. The cysteines at positions 75 and 112 are disulfide-linked. Ser-224 (acyl-ester intermediate) is an active-site residue. A disulfide bond links Cys-283 and Cys-292. Glu-356 (charge relay system) is an active-site residue. N-linked (GlcNAc...) asparagine glycosylation is present at Asn-366. The active-site Charge relay system is His-464.

It belongs to the type-B carboxylesterase/lipase family.

The enzyme catalyses a triacylglycerol + H2O = a diacylglycerol + a fatty acid + H(+). In Diutina rugosa (Yeast), this protein is Lipase 4 (LIP4).